A 308-amino-acid chain; its full sequence is GTP-binding protein RAD (308 aa).

The segment covering 1–16 (MTLNGGGSGAGGSRGG) has biased composition (gly residues). A disordered region spans residues 1 to 88 (MTLNGGGSGA…SLSSGGSDSD (88 aa)). Arginine 24 carries the omega-N-methylarginine modification. Position 26 is a phosphoserine (serine 26). Positions 48–68 (QAALTPGALTAAAAGTGTQGP) are enriched in low complexity. Residues 98–105 (GAPGVGKS) and 203–206 (NKSD) each bind GTP. The segment at 278–297 (AKRFLGRIVARNSRKMAFRA) is calmodulin-binding.

This sequence belongs to the small GTPase superfamily. RGK family. Interacts with calmodulin preferentially in the inactive, GDP-bound form. Binds CAMKII which is capable of phosphorylating RAD in vitro. Interacts with CAMK2D. Interacts with CACNB2; interaction may be involved in beta-adrenergic regulation of heart rate and contractile force. Interaction with CACNB2 regulates the trafficking of CACNA1C to the cell membrane. In terms of tissue distribution, most abundantly expressed in the heart. Also found in the skeletal muscle and lung. Lesser amounts in placenta and kidney. Also detected in adipose tissue. Overexpressed in muscle of type II diabetic humans.

Its subcellular location is the cell membrane. Its function is as follows. May regulate basal voltage-dependent L-type Ca(2+) currents and be required for beta-adrenergic augmentation of Ca(2+) influx in cardiomyocytes, thereby regulating increases in heart rate and contractile force. May play an important role in cardiac antiarrhythmia via the strong suppression of voltage-gated L-type Ca(2+) currents. Regulates voltage-dependent L-type calcium channel subunit alpha-1C trafficking to the cell membrane. Inhibits cardiac hypertrophy through the calmodulin-dependent kinase II (CaMKII) pathway. Inhibits phosphorylation and activation of CAMK2D. The polypeptide is GTP-binding protein RAD (RRAD) (Homo sapiens (Human)).